We begin with the raw amino-acid sequence, 165 residues long: NAD(P)H-quinone oxidoreductase subunit J, chloroplastic (165 aa).

The protein belongs to the complex I 30 kDa subunit family. As to quaternary structure, NDH is composed of at least 16 different subunits, 5 of which are encoded in the nucleus.

The protein resides in the plastid. It is found in the chloroplast thylakoid membrane. The enzyme catalyses a plastoquinone + NADH + (n+1) H(+)(in) = a plastoquinol + NAD(+) + n H(+)(out). It catalyses the reaction a plastoquinone + NADPH + (n+1) H(+)(in) = a plastoquinol + NADP(+) + n H(+)(out). Functionally, NDH shuttles electrons from NAD(P)H:plastoquinone, via FMN and iron-sulfur (Fe-S) centers, to quinones in the photosynthetic chain and possibly in a chloroplast respiratory chain. The immediate electron acceptor for the enzyme in this species is believed to be plastoquinone. Couples the redox reaction to proton translocation, and thus conserves the redox energy in a proton gradient. The polypeptide is NAD(P)H-quinone oxidoreductase subunit J, chloroplastic (Ipomoea purpurea (Common morning glory)).